Here is a 323-residue protein sequence, read N- to C-terminus: tRNA-dihydrouridine(16) synthase (323 aa).

FMN contacts are provided by residues 7–9 and Gln68; that span reads PME. Cys98 acts as the Proton donor in catalysis. FMN is bound by residues Lys139, 199-201, and 223-224; these read NGE and GR.

It belongs to the Dus family. DusC subfamily. FMN is required as a cofactor.

The enzyme catalyses 5,6-dihydrouridine(16) in tRNA + NADP(+) = uridine(16) in tRNA + NADPH + H(+). It carries out the reaction 5,6-dihydrouridine(16) in tRNA + NAD(+) = uridine(16) in tRNA + NADH + H(+). Functionally, catalyzes the synthesis of 5,6-dihydrouridine (D), a modified base found in the D-loop of most tRNAs, via the reduction of the C5-C6 double bond in target uridines. Specifically modifies U16 in tRNAs. The protein is tRNA-dihydrouridine(16) synthase of Pseudomonas putida (strain ATCC 47054 / DSM 6125 / CFBP 8728 / NCIMB 11950 / KT2440).